The following is a 297-amino-acid chain: MFSVLSCGRLVARAVFGGLSQTDSRDYSLVTASCGFGKDARKGILKKGMCYGDDACFIARHRTADVLGVADGVGGWRDYGVDPSQFSETLMRTCERLVKEGRFVPTNPVGILTSSYRELLQNKVPLLGSSTACLVVLDRTSHRLHTANLGDSGFLVVRAGEVVHRSDEQQHYFNTPFQLSIAPPEAEGAVLSDSPDAADSNSFDVQLGDIILTATDGLFDNMPDYMILQELKKLKNTNYESIQQTARSIAEQAHDLAYDPNYMSPFAQFACDYGLNVRGGKPDDITVLLSIVAEYTD.

The N-terminal 27 residues, 1–27 (MFSVLSCGRLVARAVFGGLSQTDSRDY), are a transit peptide targeting the mitochondrion. The PPM-type phosphatase domain occupies 28–292 (SLVTASCGFG…DDITVLLSIV (265 aa)). Residues Asp-71, Gly-72, and Asp-216 each contribute to the Mn(2+) site.

This sequence belongs to the PP2C family. Requires Mg(2+) as cofactor. Mn(2+) serves as cofactor.

It localises to the mitochondrion matrix. It catalyses the reaction O-phospho-L-seryl-[protein] + H2O = L-seryl-[protein] + phosphate. The catalysed reaction is O-phospho-L-threonyl-[protein] + H2O = L-threonyl-[protein] + phosphate. Protein phosphatase which positively regulates biosynthesis of the ubiquinone, coenzyme Q. Dephosphorylates the ubiquinone biosynthesis protein coq7 which is likely to lead to its activation. In Xenopus laevis (African clawed frog), this protein is Protein phosphatase PTC7 homolog (pptc7).